The primary structure comprises 754 residues: 5-methyltetrahydropteroyltriglutamate--homocysteine methyltransferase (754 aa).

5-methyltetrahydropteroyltri-L-glutamate is bound by residues 15–18 (RELK) and Lys114. L-homocysteine is bound by residues 430–432 (IGS) and Glu483. L-methionine-binding positions include 430–432 (IGS) and Glu483. Residues 514 to 515 (RC) and Trp560 each bind 5-methyltetrahydropteroyltri-L-glutamate. Asp598 lines the L-homocysteine pocket. Residue Asp598 participates in L-methionine binding. Glu604 is a binding site for 5-methyltetrahydropteroyltri-L-glutamate. Residues His641, Cys643, and Glu665 each contribute to the Zn(2+) site. Catalysis depends on His694, which acts as the Proton donor. Cys726 serves as a coordination point for Zn(2+).

Belongs to the vitamin-B12 independent methionine synthase family. Zn(2+) is required as a cofactor.

It carries out the reaction 5-methyltetrahydropteroyltri-L-glutamate + L-homocysteine = tetrahydropteroyltri-L-glutamate + L-methionine. Its pathway is amino-acid biosynthesis; L-methionine biosynthesis via de novo pathway; L-methionine from L-homocysteine (MetE route): step 1/1. Its function is as follows. Catalyzes the transfer of a methyl group from 5-methyltetrahydrofolate to homocysteine resulting in methionine formation. This Campylobacter jejuni (strain RM1221) protein is 5-methyltetrahydropteroyltriglutamate--homocysteine methyltransferase.